The sequence spans 257 residues: NAD kinase (257 aa).

The active-site Proton acceptor is Asp-46. NAD(+) contacts are provided by residues 46–47, 116–117, Asp-146, Ala-154, 157–162, and Asn-218; these read DG, NE, and TAYNLS.

It belongs to the NAD kinase family. A divalent metal cation is required as a cofactor.

The protein resides in the cytoplasm. The enzyme catalyses NAD(+) + ATP = ADP + NADP(+) + H(+). Functionally, involved in the regulation of the intracellular balance of NAD and NADP, and is a key enzyme in the biosynthesis of NADP. Catalyzes specifically the phosphorylation on 2'-hydroxyl of the adenosine moiety of NAD to yield NADP. This Brucella melitensis biotype 1 (strain ATCC 23456 / CCUG 17765 / NCTC 10094 / 16M) protein is NAD kinase.